A 206-amino-acid polypeptide reads, in one-letter code: Putative type I restriction enzyme MpnIIP endonuclease subunit C-terminal part (206 aa).

The C-terminal section of a putative type I restriction enzyme that if reconstituted might recognize 5'-GAN(7)TAY-3' and cleave a random distance away. Subunit R is required for both nuclease and ATPase activities, but not for modification. This chain is Putative type I restriction enzyme MpnIIP endonuclease subunit C-terminal part, found in Mycoplasma pneumoniae (strain ATCC 29342 / M129 / Subtype 1) (Mycoplasmoides pneumoniae).